The sequence spans 1092 residues: Isoleucine--tRNA ligase (1092 aa).

A 'HIGH' region motif is present at residues 53 to 63 (PFANGLPHYGH). The 'KMSKS' region signature appears at 613–617 (KLSKR). An ATP-binding site is contributed by lysine 616.

Belongs to the class-I aminoacyl-tRNA synthetase family. IleS type 2 subfamily. Monomer. Requires Zn(2+) as cofactor.

The protein localises to the cytoplasm. The catalysed reaction is tRNA(Ile) + L-isoleucine + ATP = L-isoleucyl-tRNA(Ile) + AMP + diphosphate. Catalyzes the attachment of isoleucine to tRNA(Ile). As IleRS can inadvertently accommodate and process structurally similar amino acids such as valine, to avoid such errors it has two additional distinct tRNA(Ile)-dependent editing activities. One activity is designated as 'pretransfer' editing and involves the hydrolysis of activated Val-AMP. The other activity is designated 'posttransfer' editing and involves deacylation of mischarged Val-tRNA(Ile). The polypeptide is Isoleucine--tRNA ligase (Rickettsia africae (strain ESF-5)).